Here is a 745-residue protein sequence, read N- to C-terminus: Polyribonucleotide nucleotidyltransferase (745 aa).

Residues D487 and D493 each contribute to the Mg(2+) site. Positions 554–613 (PSSTTVKIDKDKIKDIIGPGGKIIKEICETSNAKIDISDDGTVSIYASDRDKIKIALDKI) constitute a KH domain. The region spanning 623–691 (GEIFNGTVMK…NKGKAKLTIK (69 aa)) is the S1 motif domain. Positions 693–732 (AYKDHSSNNTKQKNNVKDDSESEQRRDTSKKRTWNEDNNT) are disordered. The segment covering 707 to 719 (NVKDDSESEQRRD) has biased composition (basic and acidic residues).

Belongs to the polyribonucleotide nucleotidyltransferase family. Mg(2+) is required as a cofactor.

It is found in the cytoplasm. The catalysed reaction is RNA(n+1) + phosphate = RNA(n) + a ribonucleoside 5'-diphosphate. In terms of biological role, involved in mRNA degradation. Catalyzes the phosphorolysis of single-stranded polyribonucleotides processively in the 3'- to 5'-direction. This chain is Polyribonucleotide nucleotidyltransferase, found in Rickettsia prowazekii (strain Madrid E).